The sequence spans 117 residues: Protein Aeq5-like2 (117 aa).

The Cytoplasmic segment spans residues 1–36 (MLVNARAIRQSIGIVVAQCRRDLESNRTLDYRTRMR). The helical transmembrane segment at 37 to 56 (TSLILVAMVMVSVLLPYTYG) threads the bilayer. Topologically, residues 57 to 117 (SSCDSFCTEQ…RFTKEPTEES (61 aa)) are extracellular. 4 disulfide bridges follow: cysteine 59–cysteine 94, cysteine 63–cysteine 90, cysteine 70–cysteine 83, and cysteine 74–cysteine 80.

In terms of processing, the mature peptide may be cleaved at a dibasic residue site and be shorter than the sequence shown (possibly residues 1-94). In terms of tissue distribution, expressed in endodermal ganglion neurons, apparently bipolar and following mesentery folds (observed in both planulae and primary polyps). It not expressed in nematocytes.

It localises to the membrane. The protein is Protein Aeq5-like2 of Nematostella vectensis (Starlet sea anemone).